Reading from the N-terminus, the 504-residue chain is D-alanine--D-alanyl carrier protein ligase (504 aa).

152–153 (TS) contributes to the ATP binding site. D197 lines the D-alanine pocket. 292 to 297 (NTYGPT) contacts ATP. V301 lines the D-alanine pocket. ATP contacts are provided by residues D383, 394–397 (YNGR), and K492. K492 is a D-alanine binding site.

The protein belongs to the ATP-dependent AMP-binding enzyme family. DltA subfamily.

It localises to the cytoplasm. The enzyme catalyses holo-[D-alanyl-carrier protein] + D-alanine + ATP = D-alanyl-[D-alanyl-carrier protein] + AMP + diphosphate. It participates in cell wall biogenesis; lipoteichoic acid biosynthesis. In terms of biological role, catalyzes the first step in the D-alanylation of lipoteichoic acid (LTA), the activation of D-alanine and its transfer onto the D-alanyl carrier protein (Dcp) DltC. In an ATP-dependent two-step reaction, forms a high energy D-alanyl-AMP intermediate, followed by transfer of the D-alanyl residue as a thiol ester to the phosphopantheinyl prosthetic group of the Dcp. D-alanylation of LTA plays an important role in modulating the properties of the cell wall in Gram-positive bacteria, influencing the net charge of the cell wall. The protein is D-alanine--D-alanyl carrier protein ligase of Bacillus cereus (strain Q1).